A 925-amino-acid polypeptide reads, in one-letter code: Protein PDC2 (925 aa).

One can recognise an HTH CENPB-type domain in the interval 63–138 (DANRLRKPNN…LSKMDVNISV (76 aa)). Disordered stretches follow at residues 510 to 596 (DNNQ…RNSS), 674 to 693 (NEKA…SSTA), and 904 to 925 (PTGG…TGFF). A compositionally biased stretch (polar residues) spans 513–537 (QNHLSMSQASHNPDYNSNHSNNAIE). Low complexity predominate over residues 538 to 563 (NTNNRGSNNNNNNNGSSNNINDNDSS). The segment covering 565 to 596 (KYLQQNTVDNSTKTGNPGQPNISSMESQRNSS) has biased composition (polar residues). The span at 674-686 (NEKAASDQNKSTD) shows a compositional bias: basic and acidic residues. The span at 904–916 (PTGGSNLPDSNNL) shows a compositional bias: polar residues.

Its function is as follows. Essential for the synthesis of pyruvate decarboxylase. May be important for a high basal level of PDC gene expression or play a positive role in the autoregulation control of PDC1 and PDC5. This Saccharomyces cerevisiae (strain ATCC 204508 / S288c) (Baker's yeast) protein is Protein PDC2 (PDC2).